Consider the following 197-residue polypeptide: GTP cyclohydrolase-2 (197 aa).

Residue 50–54 coordinates GTP; that stretch reads RIHSE. 3 residues coordinate Zn(2+): Cys55, Cys66, and Cys68. GTP contacts are provided by residues Gln71, 93 to 95, and Thr115; that span reads EGR. Asp127 (proton acceptor) is an active-site residue. The Nucleophile role is filled by Arg129. Positions 150 and 155 each coordinate GTP.

Belongs to the GTP cyclohydrolase II family. The cofactor is Zn(2+).

The enzyme catalyses GTP + 4 H2O = 2,5-diamino-6-hydroxy-4-(5-phosphoribosylamino)-pyrimidine + formate + 2 phosphate + 3 H(+). The protein operates within cofactor biosynthesis; riboflavin biosynthesis; 5-amino-6-(D-ribitylamino)uracil from GTP: step 1/4. Functionally, catalyzes the conversion of GTP to 2,5-diamino-6-ribosylamino-4(3H)-pyrimidinone 5'-phosphate (DARP), formate and pyrophosphate. This chain is GTP cyclohydrolase-2, found in Aeromonas hydrophila subsp. hydrophila (strain ATCC 7966 / DSM 30187 / BCRC 13018 / CCUG 14551 / JCM 1027 / KCTC 2358 / NCIMB 9240 / NCTC 8049).